The following is a 1588-amino-acid chain: Pentafunctional AROM polypeptide (1588 aa).

Positions 1-392 (MVQLAKVPIL…YGDSAQFVSD (392 aa)) are 3-dehydroquinate synthase. NAD(+)-binding positions include 43-45 (DTN), 78-81 (ETSK), 109-111 (GGV), and Asp114. Arg125 serves as a coordination point for 7-phospho-2-dehydro-3-deoxy-D-arabino-heptonate. NAD(+) is bound at residue 134-135 (TS). Residues Asp141 and Lys147 each coordinate 7-phospho-2-dehydro-3-deoxy-D-arabino-heptonate. Lys156 provides a ligand contact to NAD(+). Asn157 is a binding site for 7-phospho-2-dehydro-3-deoxy-D-arabino-heptonate. Residues 174–177 (WLET) and Asn185 each bind NAD(+). Glu189 is a binding site for Zn(2+). 7-phospho-2-dehydro-3-deoxy-D-arabino-heptonate is bound by residues 189–192 (EVIK) and Lys258. Residue Glu268 is the Proton acceptor; for 3-dehydroquinate synthase activity of the active site. 7-phospho-2-dehydro-3-deoxy-D-arabino-heptonate contacts are provided by residues 272-276 (RNLLN) and His279. His279 lines the Zn(2+) pocket. His283 serves as the catalytic Proton acceptor; for 3-dehydroquinate synthase activity. Residues His295 and Lys364 each contribute to the 7-phospho-2-dehydro-3-deoxy-D-arabino-heptonate site. His295 is a binding site for Zn(2+). Positions 405–871 (VYPFKDIPAD…WDVLHSELGA (467 aa)) are EPSP synthase. The For EPSP synthase activity role is filled by Cys853. A shikimate kinase region spans residues 890-1080 (SVVIIGMRAA…IPSGRSAFVC (191 aa)). 895-902 (GMRAAGKT) is an ATP binding site. The segment at 1081–1293 (LTFDDLTEQT…AAPGQLTVAQ (213 aa)) is 3-dehydroquinase. The Proton acceptor; for 3-dehydroquinate dehydratase activity role is filled by His1198. Catalysis depends on Lys1227, which acts as the Schiff-base intermediate with substrate; for 3-dehydroquinate dehydratase activity. The segment at 1306–1588 (PKELFVVGKP…KAIFDAVTKE (283 aa)) is shikimate dehydrogenase.

It in the N-terminal section; belongs to the sugar phosphate cyclases superfamily. Dehydroquinate synthase family. In the 2nd section; belongs to the EPSP synthase family. The protein in the 3rd section; belongs to the shikimate kinase family. This sequence in the 4th section; belongs to the type-I 3-dehydroquinase family. It in the C-terminal section; belongs to the shikimate dehydrogenase family. In terms of assembly, homodimer. The cofactor is Zn(2+).

It localises to the cytoplasm. The enzyme catalyses 7-phospho-2-dehydro-3-deoxy-D-arabino-heptonate = 3-dehydroquinate + phosphate. It catalyses the reaction 3-dehydroquinate = 3-dehydroshikimate + H2O. It carries out the reaction shikimate + NADP(+) = 3-dehydroshikimate + NADPH + H(+). The catalysed reaction is shikimate + ATP = 3-phosphoshikimate + ADP + H(+). The enzyme catalyses 3-phosphoshikimate + phosphoenolpyruvate = 5-O-(1-carboxyvinyl)-3-phosphoshikimate + phosphate. It functions in the pathway metabolic intermediate biosynthesis; chorismate biosynthesis; chorismate from D-erythrose 4-phosphate and phosphoenolpyruvate: step 2/7. Its pathway is metabolic intermediate biosynthesis; chorismate biosynthesis; chorismate from D-erythrose 4-phosphate and phosphoenolpyruvate: step 3/7. The protein operates within metabolic intermediate biosynthesis; chorismate biosynthesis; chorismate from D-erythrose 4-phosphate and phosphoenolpyruvate: step 4/7. It participates in metabolic intermediate biosynthesis; chorismate biosynthesis; chorismate from D-erythrose 4-phosphate and phosphoenolpyruvate: step 5/7. It functions in the pathway metabolic intermediate biosynthesis; chorismate biosynthesis; chorismate from D-erythrose 4-phosphate and phosphoenolpyruvate: step 6/7. The AROM polypeptide catalyzes 5 consecutive enzymatic reactions in prechorismate polyaromatic amino acid biosynthesis. This is Pentafunctional AROM polypeptide from Saccharomyces cerevisiae (strain ATCC 204508 / S288c) (Baker's yeast).